The following is a 151-amino-acid chain: Putative pre-16S rRNA nuclease (151 aa).

It belongs to the YqgF nuclease family.

The protein localises to the cytoplasm. Its function is as follows. Could be a nuclease involved in processing of the 5'-end of pre-16S rRNA. This Myxococcus xanthus (strain DK1622) protein is Putative pre-16S rRNA nuclease.